The primary structure comprises 156 residues: Putative thymidylate kinase (156 aa).

ATP is bound at residue 7–14; the sequence is GLDGTGKT.

This sequence belongs to the thymidylate kinase family.

The catalysed reaction is dTMP + ATP = dTDP + ADP. The protein operates within pyrimidine metabolism; dTTP biosynthesis. Catalyzes the conversion of dTMP to dTDP. This chain is Putative thymidylate kinase, found in Acidianus convivator (ABV).